Reading from the N-terminus, the 522-residue chain is Golgin subfamily A member 6-like protein 10 (522 aa).

Positions 1–11 (MWPQPRLPPHP) are enriched in pro residues. A disordered region spans residues 1–77 (MWPQPRLPPH…DSATGIYGEG (77 aa)). Residues 51–62 (NGSSPDTATSGG) show a composition bias toward polar residues. A coiled-coil region spans residues 157–328 (SKVEQLQDET…RLCEQEKLPG (172 aa)). A compositionally biased stretch (basic and acidic residues) spans 439-452 (KELEKSGGAEEPRG). Residues 439–503 (KELEKSGGAE…TGEAAGGAEE (65 aa)) are disordered. Low complexity-rich tracts occupy residues 456–471 (AAAA…PQGA) and 489–503 (GEAV…GAEE).

Belongs to the GOLGA6 family.

In Homo sapiens (Human), this protein is Golgin subfamily A member 6-like protein 10.